The following is a 92-amino-acid chain: Signal recognition particle 19 kDa protein (92 aa).

It belongs to the SRP19 family. Part of the signal recognition particle protein translocation system, which is composed of SRP and FtsY. Archaeal SRP consists of a 7S RNA molecule of 300 nucleotides and two protein subunits: SRP54 and SRP19.

Its subcellular location is the cytoplasm. In terms of biological role, involved in targeting and insertion of nascent membrane proteins into the cytoplasmic membrane. Binds directly to 7S RNA and mediates binding of the 54 kDa subunit of the SRP. The chain is Signal recognition particle 19 kDa protein from Haloarcula marismortui (strain ATCC 43049 / DSM 3752 / JCM 8966 / VKM B-1809) (Halobacterium marismortui).